A 186-amino-acid polypeptide reads, in one-letter code: NADH-quinone oxidoreductase subunit I (186 aa).

2 consecutive 4Fe-4S ferredoxin-type domains span residues 70–100 (LTTRADGKVQCVSCNMCATVCPAYCIEIQSA) and 113–142 (DRFEIDYSRCIFCGFCVEACPEDAIRMSKD). [4Fe-4S] cluster-binding residues include cysteine 80, cysteine 83, cysteine 86, cysteine 90, cysteine 122, cysteine 125, cysteine 128, and cysteine 132.

The protein belongs to the complex I 23 kDa subunit family. As to quaternary structure, NDH-1 is composed of 14 different subunits. Subunits NuoA, H, J, K, L, M, N constitute the membrane sector of the complex. [4Fe-4S] cluster is required as a cofactor.

The protein localises to the cell inner membrane. The enzyme catalyses a quinone + NADH + 5 H(+)(in) = a quinol + NAD(+) + 4 H(+)(out). In terms of biological role, NDH-1 shuttles electrons from NADH, via FMN and iron-sulfur (Fe-S) centers, to quinones in the respiratory chain. The immediate electron acceptor for the enzyme in this species is believed to be ubiquinone. Couples the redox reaction to proton translocation (for every two electrons transferred, four hydrogen ions are translocated across the cytoplasmic membrane), and thus conserves the redox energy in a proton gradient. This Pelobacter propionicus (strain DSM 2379 / NBRC 103807 / OttBd1) protein is NADH-quinone oxidoreductase subunit I.